Here is a 305-residue protein sequence, read N- to C-terminus: PI protein (305 aa).

This sequence belongs to the initiator RepB protein family. Homodimer.

In terms of biological role, initiation for plasmid R6K DNA replication. The chain is PI protein (pir) from Escherichia coli.